The following is a 350-amino-acid chain: (S)-tetrahydroprotoberberine N-methyltransferase (350 aa).

S-adenosyl-L-methionine-binding residues include Ser-91, Gly-129, Asn-153, Gln-157, Asp-179, Val-180, and Val-195. Cys-325 is a catalytic residue.

It belongs to the CFA/CMAS family. In terms of assembly, homodimer.

Its subcellular location is the cytoplasm. The catalysed reaction is (S)-stylopine + S-adenosyl-L-methionine = (S)-cis-N-methylstylopine + S-adenosyl-L-homocysteine. It catalyses the reaction (S)-tetrahydropalmatine + S-adenosyl-L-methionine = (S)-cis-N-methyltetrahydropalmatine + S-adenosyl-L-homocysteine. It carries out the reaction (S)-canadine + S-adenosyl-L-methionine = (S)-cis-N-methylcanadine + S-adenosyl-L-homocysteine. The enzyme catalyses (S)-scoulerine + S-adenosyl-L-methionine = (S)-cis-N-methylscoulerine + S-adenosyl-L-homocysteine. Its pathway is alkaloid biosynthesis. N-methyltransferase with a broad substrate range, accepting protoberberine alkaloids (R,S)-stylopine, (R,S)-nandinine and (R,S)-tetrahydropalmatine, and to a lesser extent (R,S)-canadine, (R,S)-tetrahydrogroenlandicine (cheilanthifoline) and (S)-scoulerine. The chain is (S)-tetrahydroprotoberberine N-methyltransferase from Eschscholzia californica (California poppy).